An 875-amino-acid chain; its full sequence is DNA topoisomerase 3-beta (875 aa).

The Toprim domain occupies 3-153 (SVLMVAEKPS…QVTYRAHFSA (151 aa)). Residues 170 to 589 (NENEAKSVDA…AIKIFKLKFM (420 aa)) form the Topo IA-type catalytic domain. The O-(5'-phospho-DNA)-tyrosine intermediate role is filled by Y332. The interval 371–391 (QTPRKGKDAGDHPPITPMKLG) is disordered.

The protein belongs to the type IA topoisomerase family.

It catalyses the reaction ATP-independent breakage of single-stranded DNA, followed by passage and rejoining.. In terms of biological role, releases the supercoiling and torsional tension of DNA introduced during the DNA replication and transcription by transiently cleaving and rejoining one strand of the DNA duplex. Introduces a single-strand break via transesterification at a target site in duplex DNA. The scissile phosphodiester is attacked by the catalytic tyrosine of the enzyme, resulting in the formation of a DNA-(5'-phosphotyrosyl)-enzyme intermediate and the expulsion of a 3'-OH DNA strand. The free DNA strand than undergoes passage around the unbroken strand thus removing DNA supercoils. Finally, in the religation step, the DNA 3'-OH attacks the covalent intermediate to expel the active-site tyrosine and restore the DNA phosphodiester backbone. Weakly relaxes negative supercoils and displays a distinct preference for binding single-stranded DNA. This chain is DNA topoisomerase 3-beta (Top3beta), found in Drosophila melanogaster (Fruit fly).